Consider the following 335-residue polypeptide: 2,4-dienoyl-CoA reductase [(3E)-enoyl-CoA-producing], mitochondrial (335 aa).

The transit peptide at 1–34 (MALLGRAFFAGVSRLPCDPGPQRFFSFGTKTLYQ) directs the protein to the mitochondrion. Lysine 42 and lysine 49 each carry N6-acetyllysine; alternate. 2 positions are modified to N6-succinyllysine; alternate: lysine 42 and lysine 49. Position 66 to 71 (66 to 71 (GGGTGL)) interacts with NADP(+). At threonine 69 the chain carries Phosphothreonine. Lysine 73 is modified (N6-succinyllysine). Residue arginine 91 participates in NADP(+) binding. Residue arginine 91 coordinates substrate. Residues lysine 97 and lysine 106 each carry the N6-acetyllysine; alternate modification. An N6-succinyllysine; alternate mark is found at lysine 97 and lysine 106. Position 117 (aspartate 117) interacts with NADP(+). Arginine 119 and phenylalanine 149 together coordinate substrate. Tyrosine 199 acts as the Proton acceptor in catalysis. NADP(+) is bound by residues lysine 214 and 240-243 (PGPI). At lysine 244 the chain carries N6-acetyllysine; alternate. Lysine 244 is modified (N6-succinyllysine; alternate). A substrate-binding site is contributed by arginine 251. Position 260 is an N6-acetyllysine; alternate (lysine 260). At lysine 260 the chain carries N6-succinyllysine; alternate. Residue lysine 315 is modified to N6-acetyllysine. Lysine 319 is subject to N6-acetyllysine; alternate. Lysine 319 carries the N6-succinyllysine; alternate modification.

It belongs to the short-chain dehydrogenases/reductases (SDR) family. 2,4-dienoyl-CoA reductase subfamily. Homotetramer.

The protein resides in the mitochondrion. The catalysed reaction is a (2E,4E)-dienoyl-CoA + NADPH + H(+) = a 4,5-saturated-(3E)-enoyl-CoA + NADP(+). It catalyses the reaction a (2E,4Z)-dienoyl-CoA + NADPH + H(+) = a 4,5-saturated-(3E)-enoyl-CoA + NADP(+). It carries out the reaction (2E,4E)-hexadienoyl-CoA + NADPH + H(+) = (3E)-hexenoyl-CoA + NADP(+). In terms of biological role, auxiliary enzyme of beta-oxidation. It participates in the metabolism of unsaturated fatty enoyl-CoA esters having double bonds in both even- and odd-numbered positions in mitochondria. Catalyzes the NADP-dependent reduction of 2,4-dienoyl-CoA to yield trans-3-enoyl-CoA. This chain is 2,4-dienoyl-CoA reductase [(3E)-enoyl-CoA-producing], mitochondrial (Decr1), found in Mus musculus (Mouse).